Here is a 451-residue protein sequence, read N- to C-terminus: Porin AaxA (451 aa).

The first 27 residues, 1 to 27, serve as a signal peptide directing secretion; it reads MASFHSSLLTALCTLCTYGILTMPAYG.

It belongs to the OprB family.

The protein resides in the cell outer membrane. Functionally, facilitates L-arginine uptake, as part of the AaxABC system. The arginine uptake by the bacterium in the macrophage may be a virulence factor against the host innate immune response. In Chlamydia caviae (strain ATCC VR-813 / DSM 19441 / 03DC25 / GPIC) (Chlamydophila caviae), this protein is Porin AaxA (aaxA).